The following is a 406-amino-acid chain: UPF0754 membrane protein SYNPCC7002_A1087 (406 aa).

The chain crosses the membrane as a helical span at residues 384–404 (IVNLGGVLGFLVGVAQSVILL).

It belongs to the UPF0754 family.

Its subcellular location is the cell inner membrane. The chain is UPF0754 membrane protein SYNPCC7002_A1087 from Picosynechococcus sp. (strain ATCC 27264 / PCC 7002 / PR-6) (Agmenellum quadruplicatum).